We begin with the raw amino-acid sequence, 245 residues long: Uridylate kinase (245 aa).

12 to 15 lines the ATP pocket; the sequence is KLSG. The involved in allosteric activation by GTP stretch occupies residues 20-25; it reads GERGVG. Gly54 lines the UMP pocket. ATP-binding residues include Gly55 and Arg59. UMP-binding positions include Asp74 and 135–142; that span reads IGSPYFST. ATP-binding residues include Asn163, Tyr169, and Asp172.

This sequence belongs to the UMP kinase family. Homohexamer.

It localises to the cytoplasm. It catalyses the reaction UMP + ATP = UDP + ADP. It participates in pyrimidine metabolism; CTP biosynthesis via de novo pathway; UDP from UMP (UMPK route): step 1/1. With respect to regulation, allosterically activated by GTP. Inhibited by UTP. Its function is as follows. Catalyzes the reversible phosphorylation of UMP to UDP. The polypeptide is Uridylate kinase (Streptococcus pneumoniae serotype 2 (strain D39 / NCTC 7466)).